The primary structure comprises 76 residues: Small ribosomal subunit protein bS18 (76 aa).

Belongs to the bacterial ribosomal protein bS18 family. Part of the 30S ribosomal subunit. Forms a tight heterodimer with protein bS6.

Functionally, binds as a heterodimer with protein bS6 to the central domain of the 16S rRNA, where it helps stabilize the platform of the 30S subunit. The polypeptide is Small ribosomal subunit protein bS18 (Pelotomaculum thermopropionicum (strain DSM 13744 / JCM 10971 / SI)).